Reading from the N-terminus, the 566-residue chain is NAD-dependent malic enzyme 3 (566 aa).

Tyr-105 (proton donor) is an active-site residue. Lys-178 serves as the catalytic Proton acceptor. A divalent metal cation-binding residues include Glu-249, Asp-250, and Asp-273. NAD(+) contacts are provided by residues 306–309 (AGTA), Asn-423, and Asn-468.

Belongs to the malic enzymes family. It depends on Mg(2+) as a cofactor. Mn(2+) serves as cofactor.

It carries out the reaction (S)-malate + NAD(+) = pyruvate + CO2 + NADH. The enzyme catalyses oxaloacetate + H(+) = pyruvate + CO2. In terms of biological role, catalyzes the decarboxylation of malate to pyruvate. Can use NAD and NADP, but with a strong preference for NAD. Can also catalyze the decarboxylation of oxaloacetate. Involved in keeping the ATP levels high. In Bacillus subtilis (strain 168), this protein is NAD-dependent malic enzyme 3 (malS).